The sequence spans 235 residues: Orotidine 5'-phosphate decarboxylase (235 aa).

Substrate is bound by residues Asp-12, Lys-34, Asp-61–Thr-70, Thr-116, Arg-177, Gln-186, and Arg-207. Lys-63 serves as the catalytic Proton donor.

This sequence belongs to the OMP decarboxylase family. Type 1 subfamily. In terms of assembly, homodimer.

It catalyses the reaction orotidine 5'-phosphate + H(+) = UMP + CO2. Its pathway is pyrimidine metabolism; UMP biosynthesis via de novo pathway; UMP from orotate: step 2/2. Functionally, catalyzes the decarboxylation of orotidine 5'-monophosphate (OMP) to uridine 5'-monophosphate (UMP). The polypeptide is Orotidine 5'-phosphate decarboxylase (Rhizobium leguminosarum bv. trifolii (strain WSM2304)).